The sequence spans 368 residues: Isopentenyl-diphosphate delta-isomerase (368 aa).

Substrate is bound at residue 7 to 8 (RK). FMN contacts are provided by residues T65, 66–68 (GMT), S96, and N125. Position 96–98 (96–98 (SQR)) interacts with substrate. A substrate-binding site is contributed by Q160. Residue E161 coordinates Mg(2+). FMN is bound by residues K193, S218, T223, 275-277 (GIR), and 296-297 (AL).

The protein belongs to the IPP isomerase type 2 family. As to quaternary structure, homooctamer. Dimer of tetramers. The cofactor is FMN. NADPH serves as cofactor. Requires Mg(2+) as cofactor.

The protein resides in the cytoplasm. The enzyme catalyses isopentenyl diphosphate = dimethylallyl diphosphate. Its function is as follows. Involved in the biosynthesis of isoprenoids. Catalyzes the 1,3-allylic rearrangement of the homoallylic substrate isopentenyl (IPP) to its allylic isomer, dimethylallyl diphosphate (DMAPP). This is Isopentenyl-diphosphate delta-isomerase from Saccharolobus solfataricus (strain ATCC 35092 / DSM 1617 / JCM 11322 / P2) (Sulfolobus solfataricus).